A 270-amino-acid chain; its full sequence is MSGQQSSPVYKIALGIEYDGSKYYGWQRQNEVRSVQEKLEKALSQVANEPINVFCAGRTDAGVHGTGQVVHFETTALRKDAAWTLGVNANLPGDIAVRWVKTVPDDFHARFSATARRYRYIIYNHRLRPAVLAKGVTHYYEPLDAERMHRAAQCLLGENDFTSFRAVQCQSRTPWRNVMHINVTRHGPYVVVDIKANAFVHHMVRNIVGSLLEVGAHNQPESWIAELLAARDRTLAAATAKAEGLYLVAVDYPDRFDLPKPPMGPLFLAD.

Aspartate 60 (nucleophile) is an active-site residue. Tyrosine 118 serves as a coordination point for substrate.

This sequence belongs to the tRNA pseudouridine synthase TruA family. Homodimer.

The catalysed reaction is uridine(38/39/40) in tRNA = pseudouridine(38/39/40) in tRNA. Formation of pseudouridine at positions 38, 39 and 40 in the anticodon stem and loop of transfer RNAs. This chain is tRNA pseudouridine synthase A, found in Salmonella agona (strain SL483).